A 283-amino-acid polypeptide reads, in one-letter code: Polyamine aminopropyltransferase (283 aa).

In terms of domain architecture, PABS spans 2-237 (ELWYTEEHTD…GHWLFGFASK (236 aa)). Glutamine 31 provides a ligand contact to S-methyl-5'-thioadenosine. Spermidine-binding residues include histidine 62 and aspartate 86. S-methyl-5'-thioadenosine contacts are provided by residues glutamate 106 and 137 to 138 (DG). Aspartate 155 serves as the catalytic Proton acceptor. 155–158 (DSTD) is a binding site for spermidine. Proline 162 is an S-methyl-5'-thioadenosine binding site.

The protein belongs to the spermidine/spermine synthase family. As to quaternary structure, homodimer or homotetramer.

Its subcellular location is the cytoplasm. It catalyses the reaction S-adenosyl 3-(methylsulfanyl)propylamine + putrescine = S-methyl-5'-thioadenosine + spermidine + H(+). It participates in amine and polyamine biosynthesis; spermidine biosynthesis; spermidine from putrescine: step 1/1. Its function is as follows. Catalyzes the irreversible transfer of a propylamine group from the amino donor S-adenosylmethioninamine (decarboxy-AdoMet) to putrescine (1,4-diaminobutane) to yield spermidine. This chain is Polyamine aminopropyltransferase, found in Clostridium perfringens (strain 13 / Type A).